A 364-amino-acid polypeptide reads, in one-letter code: Probable dual-specificity RNA methyltransferase RlmN (364 aa).

E107 (proton acceptor) is an active-site residue. The Radical SAM core domain maps to 113-346 (HEYGNSVCVT…ATIRREQGAD (234 aa)). C120 and C351 are joined by a disulfide. 3 residues coordinate [4Fe-4S] cluster: C127, C131, and C134. Residues 177-178 (GE), S209, 232-234 (SLH), and N308 each bind S-adenosyl-L-methionine. The S-methylcysteine intermediate role is filled by C351.

Belongs to the radical SAM superfamily. RlmN family. [4Fe-4S] cluster is required as a cofactor.

The protein resides in the cytoplasm. The catalysed reaction is adenosine(2503) in 23S rRNA + 2 reduced [2Fe-2S]-[ferredoxin] + 2 S-adenosyl-L-methionine = 2-methyladenosine(2503) in 23S rRNA + 5'-deoxyadenosine + L-methionine + 2 oxidized [2Fe-2S]-[ferredoxin] + S-adenosyl-L-homocysteine. It carries out the reaction adenosine(37) in tRNA + 2 reduced [2Fe-2S]-[ferredoxin] + 2 S-adenosyl-L-methionine = 2-methyladenosine(37) in tRNA + 5'-deoxyadenosine + L-methionine + 2 oxidized [2Fe-2S]-[ferredoxin] + S-adenosyl-L-homocysteine. Specifically methylates position 2 of adenine 2503 in 23S rRNA and position 2 of adenine 37 in tRNAs. Confers resistance to some classes of antibiotics. The protein is Probable dual-specificity RNA methyltransferase RlmN of Staphylococcus saprophyticus subsp. saprophyticus (strain ATCC 15305 / DSM 20229 / NCIMB 8711 / NCTC 7292 / S-41).